An 888-amino-acid chain; its full sequence is Lon protease homolog 2, peroxisomal (888 aa).

The Lon N-terminal domain maps to 11-255; the sequence is LAILPFRNKV…KATELVDRHL (245 aa). 408–415 contacts ATP; that stretch reads GPPGVGKT. The region spanning 692-877 is the Lon proteolytic domain; it reads VASAGVSVGL…EDVLENAFEG (186 aa). Residues S783 and K826 contribute to the active site. A Microbody targeting signal motif is present at residues 886–888; the sequence is SKL.

Belongs to the peptidase S16 family.

It is found in the peroxisome matrix. It carries out the reaction Hydrolysis of proteins in presence of ATP.. ATP-dependent serine protease that mediates the selective degradation of misfolded and unassembled polypeptides in the peroxisomal matrix. Necessary for type 2 peroxisome targeting signal (PTS2)-containing protein processing and facilitates peroxisome matrix protein import. This chain is Lon protease homolog 2, peroxisomal (LON2), found in Arabidopsis thaliana (Mouse-ear cress).